Here is a 445-residue protein sequence, read N- to C-terminus: NAD-specific glutamate dehydrogenase (445 aa).

Lys124 is an active-site residue.

Belongs to the Glu/Leu/Phe/Val dehydrogenases family. As to quaternary structure, homohexamer.

The protein resides in the cell surface. The enzyme catalyses L-glutamate + NAD(+) + H2O = 2-oxoglutarate + NH4(+) + NADH + H(+). Probably involved in degradation rather than biosynthesis of glutamate. The chain is NAD-specific glutamate dehydrogenase (gdh) from Porphyromonas gingivalis (strain ATCC 33277 / DSM 20709 / CIP 103683 / JCM 12257 / NCTC 11834 / 2561).